The sequence spans 1187 residues: Non-receptor tyrosine-protein kinase TYK2 (1187 aa).

Positions G26–S431 constitute an FERM domain. Residue Y292 is modified to Phosphotyrosine. A disordered region spans residues K335–A366. Over residues S339–A349 the composition is skewed to polar residues. The 80-residue stretch at G450–L529 folds into the SH2; atypical domain. 2 positions are modified to phosphoserine: S499 and S525. The Protein kinase 1 domain occupies I589–A875. Residue Y604 is modified to Phosphotyrosine. The segment at V610 to P629 is disordered. The span at G614–P626 shows a compositional bias: acidic residues. S884 bears the Phosphoserine mark. The 280-residue stretch at L897–Y1176 folds into the Protein kinase 2 domain. Residues L903–V911 and K930 contribute to the ATP site. The active-site Proton acceptor is D1023. Phosphotyrosine; by autocatalysis is present on Y1054. Y1055 carries the phosphotyrosine modification.

Belongs to the protein kinase superfamily. Tyr protein kinase family. JAK subfamily. As to quaternary structure, interacts (via FERM domain) with JAKMIP1. Interacts with PIK3R1; this interaction is important for cell migration. Interacts with MPL/TPOR. (Microbial infection) Interacts with Epstein-Barr virus protein LMP1; this interaction inhibits TYK2-mediated interferon signaling. In terms of assembly, (Microbial infection) Interacts with papillomavirus-18 protein E6; this interaction impairs JAK-STAT activation by interferon-alpha. As to quaternary structure, (Microbial infection) Interacts with Epstein-Barr virus (EBV) tegument protein BGLF2; this interaction participates in the inhibition of type I IFN signaling by the virus. In terms of processing, phosphorylated. Phosphorylation by JAK1 at Tyr-1054 and Tyr-1055 induces kinase activation. As to expression, observed in all cell lines analyzed. Expressed in a variety of lymphoid and non-lymphoid cell lines.

The enzyme catalyses L-tyrosyl-[protein] + ATP = O-phospho-L-tyrosyl-[protein] + ADP + H(+). With respect to regulation, the protein kinase 1 domain (also termed pseudokinase domain) mediates autoinhibition of the TYK2 kinase domain. Its function is as follows. Tyrosine kinase of the non-receptor type involved in numerous cytokines and interferons signaling, which regulates cell growth, development, cell migration, innate and adaptive immunity. Plays both structural and catalytic roles in numerous interleukins and interferons (IFN-alpha/beta) signaling. Associates with heterodimeric cytokine receptor complexes and activates STAT family members including STAT1, STAT3, STAT4 or STAT6. The heterodimeric cytokine receptor complexes are composed of (1) a TYK2-associated receptor chain (IFNAR1, IL12RB1, IL10RB or IL13RA1), and (2) a second receptor chain associated either with JAK1 or JAK2. In response to cytokine-binding to receptors, phosphorylates and activates receptors (IFNAR1, IL12RB1, IL10RB or IL13RA1), creating docking sites for STAT members. In turn, recruited STATs are phosphorylated by TYK2 (or JAK1/JAK2 on the second receptor chain), form homo- and heterodimers, translocate to the nucleus, and regulate cytokine/growth factor responsive genes. Negatively regulates STAT3 activity by promototing phosphorylation at a specific tyrosine that differs from the site used for signaling. This Homo sapiens (Human) protein is Non-receptor tyrosine-protein kinase TYK2 (TYK2).